A 251-amino-acid polypeptide reads, in one-letter code: Triosephosphate isomerase (251 aa).

Position 9–11 (9–11 (NWK)) interacts with substrate. The Electrophile role is filled by histidine 95. Glutamate 167 serves as the catalytic Proton acceptor. Substrate-binding positions include glycine 173, serine 213, and 234–235 (GG).

It belongs to the triosephosphate isomerase family. In terms of assembly, homodimer.

The protein localises to the cytoplasm. It carries out the reaction D-glyceraldehyde 3-phosphate = dihydroxyacetone phosphate. It functions in the pathway carbohydrate biosynthesis; gluconeogenesis. Its pathway is carbohydrate degradation; glycolysis; D-glyceraldehyde 3-phosphate from glycerone phosphate: step 1/1. Involved in the gluconeogenesis. Catalyzes stereospecifically the conversion of dihydroxyacetone phosphate (DHAP) to D-glyceraldehyde-3-phosphate (G3P). This is Triosephosphate isomerase from Fusobacterium nucleatum subsp. nucleatum (strain ATCC 25586 / DSM 15643 / BCRC 10681 / CIP 101130 / JCM 8532 / KCTC 2640 / LMG 13131 / VPI 4355).